We begin with the raw amino-acid sequence, 230 residues long: Large ribosomal subunit protein uL1 (230 aa).

This sequence belongs to the universal ribosomal protein uL1 family. As to quaternary structure, part of the 50S ribosomal subunit.

Binds directly to 23S rRNA. The L1 stalk is quite mobile in the ribosome, and is involved in E site tRNA release. Its function is as follows. Protein L1 is also a translational repressor protein, it controls the translation of the L11 operon by binding to its mRNA. The chain is Large ribosomal subunit protein uL1 from Acidiphilium cryptum (strain JF-5).